Consider the following 147-residue polypeptide: Large ribosomal subunit protein uL15 (147 aa).

The segment at Met1–Gly65 is disordered. Composition is skewed to gly residues over residues Gln21–Ala31 and Ser42–Gly52.

Belongs to the universal ribosomal protein uL15 family. Part of the 50S ribosomal subunit.

Its function is as follows. Binds to the 23S rRNA. This Heliobacterium modesticaldum (strain ATCC 51547 / Ice1) protein is Large ribosomal subunit protein uL15.